The sequence spans 283 residues: MELWYTEEWTENVRFSIKVNKHLFEGKSQFQRIDVFDSDEFGKFLTIDGLMMVTYKDEFIYHEMITHVPMATNLNIKKVLVIGGGDGGTVRELSRYPQIEKIDMVEIDKMVVDVSKEYMDICSCKLDDKRVSLYFEDGVNFVKCAHDKSYDLIIVDSTDPIGPGEGLFSTDFYKDCYRILTDDGILVNQSESPYFDFNAKEMKRANKKLKQIFPISEVYQAHIPTYPSGHWLFGFASKKLNPVKNQDRNGWEKLSLKTKYYNSDIHLGSFMLPQYVKEMLDEE.

In terms of domain architecture, PABS spans 2 to 238; it reads ELWYTEEWTE…GHWLFGFASK (237 aa). An S-methyl-5'-thioadenosine-binding site is contributed by Q31. Spermidine-binding residues include H62 and D86. S-methyl-5'-thioadenosine-binding positions include E106 and 137-138; that span reads DG. D156 (proton acceptor) is an active-site residue. 156-159 is a binding site for spermidine; sequence DSTD. P163 is a binding site for S-methyl-5'-thioadenosine.

The protein belongs to the spermidine/spermine synthase family. As to quaternary structure, homodimer or homotetramer.

Its subcellular location is the cytoplasm. The enzyme catalyses S-adenosyl 3-(methylsulfanyl)propylamine + putrescine = S-methyl-5'-thioadenosine + spermidine + H(+). It participates in amine and polyamine biosynthesis; spermidine biosynthesis; spermidine from putrescine: step 1/1. Its function is as follows. Catalyzes the irreversible transfer of a propylamine group from the amino donor S-adenosylmethioninamine (decarboxy-AdoMet) to putrescine (1,4-diaminobutane) to yield spermidine. The chain is Polyamine aminopropyltransferase from Clostridioides difficile (strain 630) (Peptoclostridium difficile).